We begin with the raw amino-acid sequence, 436 residues long: GTPase Der (436 aa).

2 EngA-type G domains span residues 4–167 (PTIA…PNEE) and 175–351 (IKFS…QSQN). GTP-binding positions include 10–17 (GRPNVGKS), 57–61 (DTGGI), 119–122 (NKVD), 181–188 (GRPNVGKS), 229–233 (DTAGM), and 294–297 (NKWD). Positions 352–436 (TRIPSAVLND…PIHLIARKRK (85 aa)) constitute a KH-like domain.

The protein belongs to the TRAFAC class TrmE-Era-EngA-EngB-Septin-like GTPase superfamily. EngA (Der) GTPase family. Associates with the 50S ribosomal subunit.

In terms of biological role, GTPase that plays an essential role in the late steps of ribosome biogenesis. This Streptococcus sanguinis (strain SK36) protein is GTPase Der.